We begin with the raw amino-acid sequence, 203 residues long: Vexin (203 aa).

Residues 59-70 show a composition bias toward basic and acidic residues; the sequence is HRTDRRDGEGRW. The segment at 59–101 is disordered; sequence HRTDRRDGEGRWSGRFQNPRLQGPHPAKTPARPVGTSEPKSAN.

It belongs to the vexin family.

Its subcellular location is the cell membrane. The protein localises to the nucleus. Its function is as follows. Required for neurogenesis in the neural plate and retina. Strongly cooperates with neural bHLH factors to promote neurogenesis. The protein is Vexin of Bos taurus (Bovine).